An 80-amino-acid chain; its full sequence is Kunitz-type serine protease inhibitor LmKTT-1a (80 aa).

The signal sequence occupies residues 1 to 21; the sequence is MKSFLLIALVLFFLFVSYASA. The BPTI/Kunitz inhibitor domain maps to 25–75; the sequence is CQLPSDVGKGKASFTRYYYNEESGKCETFIYGGVGGNSNNFLTKEDCCREC. 3 disulfides stabilise this stretch: C25–C75, C50–C71, and C72–C80.

This sequence belongs to the venom Kunitz-type family. Scorpion delta-Ktx subfamily. Delta-Ktx 2 sub-subfamily. Lacks the conserved CysII-CysIV disulfide bond but contains 2 cysteine residues at the C-terminus that generate a new disulfide bond. Expressed by the venom gland.

The protein localises to the secreted. In terms of biological role, serine protease inhibitor that inhibits trypsin at a molar ratio of 1:1 (Ki=140 nM). This chain is Kunitz-type serine protease inhibitor LmKTT-1a, found in Lychas mucronatus (Chinese swimming scorpion).